A 661-amino-acid chain; its full sequence is tRNA uridine 5-carboxymethylaminomethyl modification enzyme MnmG (661 aa).

FAD contacts are provided by residues 16–21, Val-128, and Ser-183; that span reads GAGHAG. The tract at residues 206-230 is disordered; the sequence is PRVNGNTIDYSKTEEEPGDKTPRHF. Residues 216 to 230 show a composition bias toward basic and acidic residues; it reads SKTEEEPGDKTPRHF. An NAD(+)-binding site is contributed by 277–291; that stretch reads GPRYCPSIEDKVVRF. Position 374 (Gln-374) interacts with FAD.

It belongs to the MnmG family. In terms of assembly, homodimer. Heterotetramer of two MnmE and two MnmG subunits. Requires FAD as cofactor.

Its subcellular location is the cytoplasm. NAD-binding protein involved in the addition of a carboxymethylaminomethyl (cmnm) group at the wobble position (U34) of certain tRNAs, forming tRNA-cmnm(5)s(2)U34. The chain is tRNA uridine 5-carboxymethylaminomethyl modification enzyme MnmG from Lactobacillus helveticus (strain DPC 4571).